Consider the following 227-residue polypeptide: Translation initiation factor 6 (227 aa).

This sequence belongs to the eIF-6 family.

Its function is as follows. Binds to the 50S ribosomal subunit and prevents its association with the 30S ribosomal subunit to form the 70S initiation complex. This chain is Translation initiation factor 6, found in Pyrococcus furiosus (strain ATCC 43587 / DSM 3638 / JCM 8422 / Vc1).